We begin with the raw amino-acid sequence, 453 residues long: MEGVDIPGRPSPWRVCVTRPQVHPINAKVAPMPGATSHVPLLSVVIPTYNRDALLDRTLGTLARQTTAPEDFEVVVSDDGSTDTTRDVVRSYEDRLRIKYVFQEDLGYRVASARNGGARLASAPLLAFLDTGVLAGPQYVQSVLAAHAGPAPAKVVLGCCYGYDPRNPHPELHSLVEEFPPEEAVRRVGDAPWFQDMRLPEFTAVDFDLSRMHMPWLWFWTLNVSLPAADFWRVGGFDEDFTGWGGEDIELGYRLHAHGIPMTVSRESWGIEAPHERTHEANVSSLMLNCDRFVRKHPSLLPELFWAVTNRGIFGSVETERLRFEEWASQARGQQVLDEIAIGLDTLPPSQHTQRVAVFGSGTEGLPTAPRQNVELFLCDYDEGVLARQESRDDGAVSTWHLSGLRTPWPDQHFDLVIITSRMDGPRQAWGEAFTKEAHRIASSVVEPSLSGD.

The protein belongs to the glycosyltransferase 2 family. The cofactor is Mn(2+).

It carries out the reaction validoxylamine A + UDP-alpha-D-glucose = validamycin A + UDP + H(+). Its function is as follows. Involved in the biosynthesis of the antifungal agent validamycin A. Catalyzes the final attachment of glucose from UDP-alpha-D-glucose to validoxylamine A to yield validamycin A. The chain is Validoxylamine A glucosyltransferase from Streptomyces hygroscopicus subsp. limoneus.